We begin with the raw amino-acid sequence, 205 residues long: Holliday junction branch migration complex subunit RuvA (205 aa).

Residues 1–64 (MIGKLKGTID…EDQLKLFGFL (64 aa)) are domain I. The domain II stretch occupies residues 65 to 143 (SALEREWFRL…AFVGEMAPSI (79 aa)). The segment at 144-153 (GLKQELGEGV) is flexible linker. A domain III region spans residues 153–205 (VAAAPVSDAVSALTNLGYSRDQAANAVAAALKNGGEGADSARLIRLGLKELSR).

This sequence belongs to the RuvA family. Homotetramer. Forms an RuvA(8)-RuvB(12)-Holliday junction (HJ) complex. HJ DNA is sandwiched between 2 RuvA tetramers; dsDNA enters through RuvA and exits via RuvB. An RuvB hexamer assembles on each DNA strand where it exits the tetramer. Each RuvB hexamer is contacted by two RuvA subunits (via domain III) on 2 adjacent RuvB subunits; this complex drives branch migration. In the full resolvosome a probable DNA-RuvA(4)-RuvB(12)-RuvC(2) complex forms which resolves the HJ.

The protein resides in the cytoplasm. Functionally, the RuvA-RuvB-RuvC complex processes Holliday junction (HJ) DNA during genetic recombination and DNA repair, while the RuvA-RuvB complex plays an important role in the rescue of blocked DNA replication forks via replication fork reversal (RFR). RuvA specifically binds to HJ cruciform DNA, conferring on it an open structure. The RuvB hexamer acts as an ATP-dependent pump, pulling dsDNA into and through the RuvAB complex. HJ branch migration allows RuvC to scan DNA until it finds its consensus sequence, where it cleaves and resolves the cruciform DNA. The chain is Holliday junction branch migration complex subunit RuvA from Sinorhizobium medicae (strain WSM419) (Ensifer medicae).